Reading from the N-terminus, the 249-residue chain is Enolase-phosphatase E1 (249 aa).

Mg(2+)-binding residues include aspartate 15 and glutamate 17. Substrate contacts are provided by residues 146 to 147 and lysine 180; that span reads SS. Residue aspartate 205 participates in Mg(2+) binding.

The protein belongs to the HAD-like hydrolase superfamily. MasA/MtnC family. In terms of assembly, monomer. The cofactor is Mg(2+).

Its subcellular location is the cytoplasm. It localises to the nucleus. The catalysed reaction is 5-methylsulfanyl-2,3-dioxopentyl phosphate + H2O = 1,2-dihydroxy-5-(methylsulfanyl)pent-1-en-3-one + phosphate. It functions in the pathway amino-acid biosynthesis; L-methionine biosynthesis via salvage pathway; L-methionine from S-methyl-5-thio-alpha-D-ribose 1-phosphate: step 3/6. Its pathway is amino-acid biosynthesis; L-methionine biosynthesis via salvage pathway; L-methionine from S-methyl-5-thio-alpha-D-ribose 1-phosphate: step 4/6. In terms of biological role, bifunctional enzyme that catalyzes the enolization of 2,3-diketo-5-methylthiopentyl-1-phosphate (DK-MTP-1-P) into the intermediate 2-hydroxy-3-keto-5-methylthiopentenyl-1-phosphate (HK-MTPenyl-1-P), which is then dephosphorylated to form the acireductone 1,2-dihydroxy-3-keto-5-methylthiopentene (DHK-MTPene). In Caenorhabditis briggsae, this protein is Enolase-phosphatase E1.